The following is a 316-amino-acid chain: Putative phosphoribosylaminoimidazole-succinocarboxamide synthase 2 (316 aa).

It belongs to the SAICAR synthetase family.

The enzyme catalyses 5-amino-1-(5-phospho-D-ribosyl)imidazole-4-carboxylate + L-aspartate + ATP = (2S)-2-[5-amino-1-(5-phospho-beta-D-ribosyl)imidazole-4-carboxamido]succinate + ADP + phosphate + 2 H(+). The protein operates within purine metabolism; IMP biosynthesis via de novo pathway; 5-amino-1-(5-phospho-D-ribosyl)imidazole-4-carboxamide from 5-amino-1-(5-phospho-D-ribosyl)imidazole-4-carboxylate: step 1/2. This is Putative phosphoribosylaminoimidazole-succinocarboxamide synthase 2 (purC2) from Agrobacterium fabrum (strain C58 / ATCC 33970) (Agrobacterium tumefaciens (strain C58)).